Reading from the N-terminus, the 194-residue chain is Imidazoleglycerol-phosphate dehydratase (194 aa).

The protein belongs to the imidazoleglycerol-phosphate dehydratase family.

Its subcellular location is the cytoplasm. The enzyme catalyses D-erythro-1-(imidazol-4-yl)glycerol 3-phosphate = 3-(imidazol-4-yl)-2-oxopropyl phosphate + H2O. Its pathway is amino-acid biosynthesis; L-histidine biosynthesis; L-histidine from 5-phospho-alpha-D-ribose 1-diphosphate: step 6/9. This Bacillus thuringiensis (strain Al Hakam) protein is Imidazoleglycerol-phosphate dehydratase.